The primary structure comprises 148 residues: Probable DNA-directed RNA polymerases I, II, and III subunit RPABC3 (148 aa).

A non-specific ssDNA binding region spans residues 16-40; it reads DPDGKKFDRVSRYFCDAESFKMELI.

Belongs to the eukaryotic RPB8 RNA polymerase subunit family. Component of the RNA polymerase I (Pol I), RNA polymerase II (Pol II) and RNA polymerase III (Pol III) complexes consisting of at least 13, 12 and 17 subunits, respectively. Directly interacts with POLR2A.

The protein resides in the nucleus. In terms of biological role, DNA-dependent RNA polymerase catalyzes the transcription of DNA into RNA using the four ribonucleoside triphosphates as substrates. Common component of RNA polymerases I, II and III which synthesize ribosomal RNA precursors, mRNA precursors and many functional non-coding RNAs, and small RNAs, such as 5S rRNA and tRNAs, respectively. The protein is Probable DNA-directed RNA polymerases I, II, and III subunit RPABC3 of Caenorhabditis briggsae.